The sequence spans 145 residues: D-aminoacyl-tRNA deacylase (145 aa).

The Gly-cisPro motif, important for rejection of L-amino acids motif lies at 137 to 138; sequence GP.

The protein belongs to the DTD family. In terms of assembly, homodimer.

It is found in the cytoplasm. It catalyses the reaction glycyl-tRNA(Ala) + H2O = tRNA(Ala) + glycine + H(+). The enzyme catalyses a D-aminoacyl-tRNA + H2O = a tRNA + a D-alpha-amino acid + H(+). Functionally, an aminoacyl-tRNA editing enzyme that deacylates mischarged D-aminoacyl-tRNAs. Also deacylates mischarged glycyl-tRNA(Ala), protecting cells against glycine mischarging by AlaRS. Acts via tRNA-based rather than protein-based catalysis; rejects L-amino acids rather than detecting D-amino acids in the active site. By recycling D-aminoacyl-tRNA to D-amino acids and free tRNA molecules, this enzyme counteracts the toxicity associated with the formation of D-aminoacyl-tRNA entities in vivo and helps enforce protein L-homochirality. The protein is D-aminoacyl-tRNA deacylase of Pseudomonas putida (strain ATCC 700007 / DSM 6899 / JCM 31910 / BCRC 17059 / LMG 24140 / F1).